We begin with the raw amino-acid sequence, 311 residues long: Malate dehydrogenase (311 aa).

NAD(+) is bound by residues 7-13 (GAAGGIG) and Asp-34. 2 residues coordinate substrate: Arg-81 and Arg-87. NAD(+)-binding positions include Asn-94 and 117–119 (ITN). 2 residues coordinate substrate: Asn-119 and Arg-153. Catalysis depends on His-177, which acts as the Proton acceptor. Met-227 is an NAD(+) binding site.

This sequence belongs to the LDH/MDH superfamily. MDH type 1 family. In terms of assembly, homodimer.

It catalyses the reaction (S)-malate + NAD(+) = oxaloacetate + NADH + H(+). Catalyzes the reversible oxidation of malate to oxaloacetate. This is Malate dehydrogenase from Haemophilus influenzae (strain 86-028NP).